We begin with the raw amino-acid sequence, 339 residues long: GATA transcription factor 5 (339 aa).

Disordered stretches follow at residues 68 to 88 (MVRV…RSSD), 126 to 145 (EYSG…WLTG), 163 to 206 (PVPA…PSSP), and 221 to 242 (ERPP…SGEL). Residues 126–136 (EYSGPNLTGTP) show a composition bias toward polar residues. Positions 167–174 (KARSKRNR) match the Nuclear localization signal motif. The segment covering 181-206 (SLGSSSSSGPSSSGSTSSSSSGPSSP) has biased composition (low complexity). A GATA-type zinc finger spans residues 245–299 (LQPQRKCSHCGVQKTPQWRAGPMGAKTLCNACGVRYKSGRLLPEYRPACSPTFSS). Residues 314 to 339 (RKKEPTSDNETGLNQLVQSPQAVPSF) form a disordered region. Positions 321-339 (DNETGLNQLVQSPQAVPSF) are enriched in polar residues.

The protein belongs to the type IV zinc-finger family. Class A subfamily.

The protein resides in the nucleus. Functionally, transcriptional activator that specifically binds 5'-GATA-3' or 5'-GAT-3' motifs within gene promoters. May be involved in the regulation of some light-responsive genes. The chain is GATA transcription factor 5 (GATA5) from Arabidopsis thaliana (Mouse-ear cress).